We begin with the raw amino-acid sequence, 314 residues long: uncharacterized protein (314 aa).

The disordered stretch occupies residues 1-71 (MAGNSQRRGA…QRAGRKADET (71 aa)). The S-adenosyl-L-methionine site is built by Gly266, Ile286, and Leu295.

Belongs to the class IV-like SAM-binding methyltransferase superfamily. RNA methyltransferase TrmH family.

This is an uncharacterized protein from Mycolicibacterium smegmatis (strain ATCC 700084 / mc(2)155) (Mycobacterium smegmatis).